Reading from the N-terminus, the 246-residue chain is Probable phosphatase ASA_1316 (246 aa).

Zn(2+)-binding residues include histidine 8, histidine 10, histidine 16, histidine 41, glutamate 74, histidine 102, histidine 132, aspartate 193, and histidine 195.

It belongs to the PHP family. The cofactor is Zn(2+).

This is Probable phosphatase ASA_1316 from Aeromonas salmonicida (strain A449).